The chain runs to 404 residues: MQYSEIMVRYGELSTKGKNRMRFINKLKRNIQAVLSVYPKVHVKADRDRTHVYLHGTDYQPVAESLKQIFGIQNFSPSYKIEKSVPALIEAVQSIMKEVYQEGMTFKITSKRSDHSFELDSRELNQTLGDAVFEAIPNVQVKMKAPDIELRVEIREEAAYISYETIRGAGGLPVGTSGKGMLMLSGGIDSPVAGYLALKRGVDIEAVHFASPPYTSPGALKKAQDLTRKLTKFGGNIQFIEVPFTEIQEEIKAKAPEAYLMTLTRRFMMRITDRIREERSAQVIINGESLGQVASQTIESMQAINAVTNTPVIRPVVTMDKLEIIDIAEKIDTFQISIQPFEDCCTIFAPDRPKTNPKIKNAEKYETYLDVEGLVERAVAGIMITEITPQAETDEVDELIEGLL.

Residues 60–165 form the THUMP domain; the sequence is QPVAESLKQI…EEAAYISYET (106 aa). Residues 183–184, 208–209, Arg-265, Gly-287, and Gln-296 each bind ATP; these read ML and HF.

The protein belongs to the ThiI family.

It localises to the cytoplasm. It catalyses the reaction [ThiI sulfur-carrier protein]-S-sulfanyl-L-cysteine + a uridine in tRNA + 2 reduced [2Fe-2S]-[ferredoxin] + ATP + H(+) = [ThiI sulfur-carrier protein]-L-cysteine + a 4-thiouridine in tRNA + 2 oxidized [2Fe-2S]-[ferredoxin] + AMP + diphosphate. The catalysed reaction is [ThiS sulfur-carrier protein]-C-terminal Gly-Gly-AMP + S-sulfanyl-L-cysteinyl-[cysteine desulfurase] + AH2 = [ThiS sulfur-carrier protein]-C-terminal-Gly-aminoethanethioate + L-cysteinyl-[cysteine desulfurase] + A + AMP + 2 H(+). It functions in the pathway cofactor biosynthesis; thiamine diphosphate biosynthesis. Its function is as follows. Catalyzes the ATP-dependent transfer of a sulfur to tRNA to produce 4-thiouridine in position 8 of tRNAs, which functions as a near-UV photosensor. Also catalyzes the transfer of sulfur to the sulfur carrier protein ThiS, forming ThiS-thiocarboxylate. This is a step in the synthesis of thiazole, in the thiamine biosynthesis pathway. The sulfur is donated as persulfide by IscS. The protein is Probable tRNA sulfurtransferase of Streptococcus sanguinis (strain SK36).